Consider the following 1715-residue polypeptide: Rho guanine nucleotide exchange factor TIAM2 (1715 aa).

Polar residues-rich tracts occupy residues 1-22 (MGNSESQYTFQGSKNHSNTVTG) and 218-229 (GSPSSQRPSPTD). Disordered stretches follow at residues 1–27 (MGNSESQYTFQGSKNHSNTVTGAKQKP), 174–249 (FHNG…WYDS), 263–294 (SFLAPSTPDPSLPSSFPPSDTKKPFNQSSSLS), and 385–418 (TGSLSRKKRKLQEPRSMEGSEYFDSHSDGLNAEG). Glycine 2 is lipidated: N-myristoyl glycine. Residues 235-245 (SKGSSLSSESS) are compositionally biased toward low complexity. A compositionally biased stretch (basic and acidic residues) spans 395–411 (LQEPRSMEGSEYFDSHS). Positions 504–618 (VVRKAGWLFF…WVTAIHSACA (115 aa)) constitute a PH 1 domain. Residues 665–692 (PKNRKAIENQIRQWEQNLEKFHMDLFRM) are a coiled coil. In terms of domain architecture, RBD spans 831 to 902 (VQTYVHFQDN…YMQEQVYDEI (72 aa)). The PDZ domain occupies 911–997 (DVQLTKTGDM…GLTLVARPVT (87 aa)). Residues 1092 to 1113 (THTNSMEAPTESHDPPPRPLAR) form a disordered region. In terms of domain architecture, DH spans 1120–1314 (RLRKVIQELV…EKVASHINEM (195 aa)). Residues 1347-1478 (LLMHSTVSWL…KVIRSILREN (132 aa)) enclose the PH 2 domain. Residues 1515–1582 (SLKGLRTSSS…EGLAEFPDGL (68 aa)) are disordered. Positions 1522–1532 (SSSSEWPSEPS) are enriched in low complexity. Residues 1533-1552 (KGNSLDSDECSLSSGTQSSG) are compositionally biased toward polar residues. Residues 1557 to 1572 (ESRRDSKSTELEKDAQ) are compositionally biased toward basic and acidic residues. Serine 1604 bears the Phosphoserine mark. Phosphothreonine is present on threonine 1662.

The protein belongs to the TIAM family. As to quaternary structure, interacts with MAP1A, MAP1B, PARP1 and YWHAE. Interacts with CD44, PARD3 and MAPK8IP2. In terms of processing, phosphorylated on serine and threonine residues. Phosphorylated on Thr-1662 by Rho-kinase. Its phosphorylation by Rho-kinase inhibits its guanine nucleotide exchange activity, its interaction with MAP1A, MAP1B, PARP1 and YWHAE and reduces its ability to promote neurite growth. In terms of tissue distribution, expressed in fetal brain (at protein level). Expressed in the olfactory bulb, cortical plate of the cerebral cortex, caudate putamen, hippocampus, ependymal cells of the lateral surface of the lateral ventricles of the brain. Weakly expressed in heart, lung, liver, skeletal muscle, kidney and testis.

Its subcellular location is the cytoplasm. It is found in the cell projection. It localises to the lamellipodium. The protein localises to the filopodium. The protein resides in the growth cone. Its subcellular location is the neuron projection. It is found in the perikaryon. Modulates the activity of RHO-like proteins and connects extracellular signals to cytoskeletal activities. Acts as a GDP-dissociation stimulator protein that stimulates the GDP-GTP exchange activity of RHO-like GTPases and activates them. Activates specifically RAC1, but not CDC42 and RHOA. Mediates extracellular laminin signals to activate Rac1, contributing to neurite growth. Involved in lamellipodial formation and advancement of the growth cone of embryonic hippocampal neurons. Promotes migration of neurons in the cerebral cortex. When overexpressed, induces membrane ruffling accompanied by the accumulation of actin filaments along the altered plasma membrane. In Mus musculus (Mouse), this protein is Rho guanine nucleotide exchange factor TIAM2.